Consider the following 225-residue polypeptide: Protein GrpE (225 aa).

Disordered regions lie at residues M1–G44 and V183–G225.

Belongs to the GrpE family. As to quaternary structure, homodimer.

It localises to the cytoplasm. Participates actively in the response to hyperosmotic and heat shock by preventing the aggregation of stress-denatured proteins, in association with DnaK and GrpE. It is the nucleotide exchange factor for DnaK and may function as a thermosensor. Unfolded proteins bind initially to DnaJ; upon interaction with the DnaJ-bound protein, DnaK hydrolyzes its bound ATP, resulting in the formation of a stable complex. GrpE releases ADP from DnaK; ATP binding to DnaK triggers the release of the substrate protein, thus completing the reaction cycle. Several rounds of ATP-dependent interactions between DnaJ, DnaK and GrpE are required for fully efficient folding. The chain is Protein GrpE from Streptomyces coelicolor (strain ATCC BAA-471 / A3(2) / M145).